The primary structure comprises 175 residues: Shikimate kinase (175 aa).

17–22 (GAGKST) lines the ATP pocket. Position 21 (S21) interacts with Mg(2+). Residues D39, R63, and G85 each coordinate substrate. Position 123 (R123) interacts with ATP. R142 provides a ligand contact to substrate. Residue Q159 coordinates ATP.

Belongs to the shikimate kinase family. In terms of assembly, monomer. The cofactor is Mg(2+).

It is found in the cytoplasm. The catalysed reaction is shikimate + ATP = 3-phosphoshikimate + ADP + H(+). It functions in the pathway metabolic intermediate biosynthesis; chorismate biosynthesis; chorismate from D-erythrose 4-phosphate and phosphoenolpyruvate: step 5/7. Catalyzes the specific phosphorylation of the 3-hydroxyl group of shikimic acid using ATP as a cosubstrate. This Photobacterium profundum (strain SS9) protein is Shikimate kinase.